A 1180-amino-acid polypeptide reads, in one-letter code: Tudor domain-containing protein 1 (1180 aa).

2 disordered regions span residues 1-66 (MSVK…KKNN) and 79-138 (SQED…RPAK). Over residues 27–41 (NFEKNENKLPPHESL) the composition is skewed to basic and acidic residues. Polar residues-rich tracts occupy residues 79 to 91 (SQED…NPNG) and 110 to 122 (NSVS…SNSP). Positions 170, 173, 181, 184, 190, 194, 202, and 206 each coordinate Zn(2+). The segment at 170-206 (CHRCGLFGSLRCSQCKQTYYCSTACQRRDWSAHSIVC) adopts an MYND-type zinc-finger fold. The Tudor 1 domain occupies 312 to 372 (IPVKGEVCIA…YHLNRNIDLF (61 aa)). The segment at 450 to 469 (SGQDSKKENADQSDPEDVGK) is disordered. 3 consecutive Tudor domains span residues 541–600 (YPAI…LLEL), 762–821 (KAEI…FLNL), and 990–1048 (RPRI…HLAL).

Belongs to the TDRD1 family. In terms of assembly, found in a mRNP complex, at least composed of TDRD1, TDRD6, TDRD7 and DDX4. Interacts with MAEL. Interacts with PIWIL1, PIWIL2 and PIWIL4 (when methylated on arginine residues). Interacts with TDRD12. Testis and ovary specific. Also expressed in several cancers.

It localises to the cytoplasm. Functionally, plays a central role during spermatogenesis by participating in the repression transposable elements and preventing their mobilization, which is essential for the germline integrity. Acts via the piRNA metabolic process, which mediates the repression of transposable elements during meiosis by forming complexes composed of piRNAs and Piwi proteins and governs the methylation and subsequent repression of transposons. Required for the localization of Piwi proteins to the meiotic nuage. Involved in the piRNA metabolic process by ensuring the entry of correct transcripts into the normal piRNA pool and limiting the entry of cellular transcripts into the piRNA pathway. May act by allowing the recruitment of piRNA biogenesis or loading factors that ensure the correct entry of transcripts and piRNAs into Piwi proteins. This is Tudor domain-containing protein 1 (TDRD1) from Homo sapiens (Human).